The chain runs to 224 residues: 2-C-methyl-D-erythritol 4-phosphate cytidylyltransferase (224 aa).

It belongs to the IspD/TarI cytidylyltransferase family. IspD subfamily.

The catalysed reaction is 2-C-methyl-D-erythritol 4-phosphate + CTP + H(+) = 4-CDP-2-C-methyl-D-erythritol + diphosphate. Its pathway is isoprenoid biosynthesis; isopentenyl diphosphate biosynthesis via DXP pathway; isopentenyl diphosphate from 1-deoxy-D-xylulose 5-phosphate: step 2/6. Its function is as follows. Catalyzes the formation of 4-diphosphocytidyl-2-C-methyl-D-erythritol from CTP and 2-C-methyl-D-erythritol 4-phosphate (MEP). The protein is 2-C-methyl-D-erythritol 4-phosphate cytidylyltransferase of Caldicellulosiruptor bescii (strain ATCC BAA-1888 / DSM 6725 / KCTC 15123 / Z-1320) (Anaerocellum thermophilum).